A 558-amino-acid polypeptide reads, in one-letter code: Potassium-transporting ATPase potassium-binding subunit (558 aa).

12 helical membrane passes run 1-21, 66-86, 127-147, 166-186, 245-265, 281-301, 327-347, 354-374, 377-397, 416-436, 482-502, and 531-551; these read MEII…SGYL, FNGF…WLFL, MIVM…VCIA, IVRF…ILLM, IWSN…MLFL, ALIL…LTMW, FGAG…TGSV, LTPI…VFGG, VGLM…SLMV, IVLV…LAFM, ISTG…QLMI, and IVFI…LGPI.

This sequence belongs to the KdpA family. In terms of assembly, the system is composed of three essential subunits: KdpA, KdpB and KdpC.

Its subcellular location is the cell membrane. Its function is as follows. Part of the high-affinity ATP-driven potassium transport (or Kdp) system, which catalyzes the hydrolysis of ATP coupled with the electrogenic transport of potassium into the cytoplasm. This subunit binds the extracellular potassium ions and delivers the ions to the membrane domain of KdpB through an intramembrane tunnel. In Staphylococcus aureus (strain USA300), this protein is Potassium-transporting ATPase potassium-binding subunit.